The following is a 638-amino-acid chain: RNA exonuclease 3 (638 aa).

The tract at residues 37–136 (AQDQVLEQKE…PPRRAPKEAL (100 aa)) is disordered. The segment covering 55 to 76 (LKLEPRPEAKETPKDDLRHVSD) has biased composition (basic and acidic residues). A compositionally biased stretch (polar residues) spans 77-111 (SGRSTPVKKTTAPATNAENISPVSRQPNIPKNTAT). The 177-residue stretch at 408–584 (ICFDCEMGYT…VEDALATGDL (177 aa)) folds into the Exonuclease domain. The span at 612 to 622 (DSSSNTVSMQT) shows a compositional bias: polar residues. The tract at residues 612–638 (DSSSNTVSMQTKLGEGAGAKRAREGTS) is disordered.

This sequence belongs to the REXO1/REXO3 family.

It is found in the cytoplasm. The protein localises to the nucleus. 3' to 5' exoribonuclease required for proper 3' end maturation of MRP RNA and of the U5L snRNA. This Emericella nidulans (strain FGSC A4 / ATCC 38163 / CBS 112.46 / NRRL 194 / M139) (Aspergillus nidulans) protein is RNA exonuclease 3 (rex3).